Consider the following 389-residue polypeptide: Ethanolamine-phosphate cytidylyltransferase (389 aa).

CTP is bound by residues 221–222 (AF), 229–232 (HVDF), Lys-259, 307–310 (HGKT), and 336–340 (SGNDL). 2 positions are modified to phosphothreonine: Thr-341 and Thr-342.

The protein belongs to the cytidylyltransferase family.

The catalysed reaction is phosphoethanolamine + CTP + H(+) = CDP-ethanolamine + diphosphate. It participates in phospholipid metabolism; phosphatidylethanolamine biosynthesis; phosphatidylethanolamine from ethanolamine: step 2/3. Functionally, ethanolamine-phosphate cytidylyltransferase that catalyzes the second step in the synthesis of phosphatidylethanolamine (PE) from ethanolamine via the CDP-ethanolamine pathway. Phosphatidylethanolamine is a dominant inner-leaflet phospholipid in cell membranes, where it plays a role in membrane function by structurally stabilizing membrane-anchored proteins, and participates in important cellular processes such as cell division, cell fusion, blood coagulation, and apoptosis. In Bos taurus (Bovine), this protein is Ethanolamine-phosphate cytidylyltransferase (PCYT2).